The primary structure comprises 181 residues: 3-hydroxyanthranilate 3,4-dioxygenase (181 aa).

R46 provides a ligand contact to O2. 3 residues coordinate Fe cation: H50, E56, and H95. E56 contributes to the substrate binding site. Residues R99 and E109 each contribute to the substrate site.

Belongs to the 3-HAO family. The cofactor is Fe(2+).

It localises to the cytoplasm. It catalyses the reaction 3-hydroxyanthranilate + O2 = (2Z,4Z)-2-amino-3-carboxymuconate 6-semialdehyde. It participates in cofactor biosynthesis; NAD(+) biosynthesis; quinolinate from L-kynurenine: step 3/3. In terms of biological role, catalyzes the oxidative ring opening of 3-hydroxyanthranilate to 2-amino-3-carboxymuconate semialdehyde, which spontaneously cyclizes to quinolinate. This chain is 3-hydroxyanthranilate 3,4-dioxygenase, found in Mycosarcoma maydis (Corn smut fungus).